The primary structure comprises 1399 residues: DNA-directed RNA polymerase subunit beta' (1399 aa).

4 residues coordinate Zn(2+): Cys-70, Cys-72, Cys-85, and Cys-88. Mg(2+)-binding residues include Asp-460, Asp-462, and Asp-464. Residues Cys-814, Cys-888, Cys-895, and Cys-898 each contribute to the Zn(2+) site.

Belongs to the RNA polymerase beta' chain family. In terms of assembly, the RNAP catalytic core consists of 2 alpha, 1 beta, 1 beta' and 1 omega subunit. When a sigma factor is associated with the core the holoenzyme is formed, which can initiate transcription. It depends on Mg(2+) as a cofactor. Zn(2+) serves as cofactor.

The catalysed reaction is RNA(n) + a ribonucleoside 5'-triphosphate = RNA(n+1) + diphosphate. Functionally, DNA-dependent RNA polymerase catalyzes the transcription of DNA into RNA using the four ribonucleoside triphosphates as substrates. The polypeptide is DNA-directed RNA polymerase subunit beta' (Pseudomonas entomophila (strain L48)).